The following is a 400-amino-acid chain: Dihydrolipoyllysine-residue succinyltransferase component of 2-oxoglutarate dehydrogenase complex (400 aa).

Positions 2-77 (GVKIIVPSLG…AVGEEIGDIN (76 aa)) constitute a Lipoyl-binding domain. N6-lipoyllysine is present on K43. A compositionally biased stretch (polar residues) spans 85 to 97 (NSNEAAKPQTASQ). Residues 85–113 (NSNEAAKPQTASQPVPEKVPKKPAVANNT) form a disordered region. Residues 113–150 (TLAPSVQKLVTENKLDPNNIKGTGKDGRITKGDVLETM) form the Peripheral subunit-binding (PSBD) domain. Active-site residues include H371 and D375.

Belongs to the 2-oxoacid dehydrogenase family. In terms of assembly, forms a 24-polypeptide structural core with octahedral symmetry. Part of the 2-oxoglutarate dehydrogenase (OGDH) complex composed of E1 (2-oxoglutarate dehydrogenase), E2 (dihydrolipoamide succinyltransferase) and E3 (dihydrolipoamide dehydrogenase); the complex contains multiple copies of the three enzymatic components (E1, E2 and E3). Requires (R)-lipoate as cofactor.

It catalyses the reaction N(6)-[(R)-dihydrolipoyl]-L-lysyl-[protein] + succinyl-CoA = N(6)-[(R)-S(8)-succinyldihydrolipoyl]-L-lysyl-[protein] + CoA. It participates in amino-acid degradation; L-lysine degradation via saccharopine pathway; glutaryl-CoA from L-lysine: step 6/6. E2 component of the 2-oxoglutarate dehydrogenase (OGDH) complex which catalyzes the second step in the conversion of 2-oxoglutarate to succinyl-CoA and CO(2). The polypeptide is Dihydrolipoyllysine-residue succinyltransferase component of 2-oxoglutarate dehydrogenase complex (sucB) (Rickettsia bellii (strain RML369-C)).